Here is a 151-residue protein sequence, read N- to C-terminus: Cell division protein SepF (151 aa).

The tract at residues 31 to 53 (EEVEEPRRRSRTGVKQERETGQN) is disordered.

The protein belongs to the SepF family. Homodimer. Interacts with FtsZ.

Its subcellular location is the cytoplasm. Cell division protein that is part of the divisome complex and is recruited early to the Z-ring. Probably stimulates Z-ring formation, perhaps through the cross-linking of FtsZ protofilaments. Its function overlaps with FtsA. The protein is Cell division protein SepF of Halalkalibacterium halodurans (strain ATCC BAA-125 / DSM 18197 / FERM 7344 / JCM 9153 / C-125) (Bacillus halodurans).